Here is an 802-residue protein sequence, read N- to C-terminus: Ribosomal protein S6 kinase alpha-5 (802 aa).

Residues 1–22 (MEEEGGSSGGAAGTSADGGDGG) show a composition bias toward gly residues. A disordered region spans residues 1-23 (MEEEGGSSGGAAGTSADGGDGGE). The region spanning 49 to 318 (FELLKVLGTG…ADEIKEHLFF (270 aa)) is the Protein kinase 1 domain. ATP contacts are provided by residues 55–63 (LGTGAYGKV) and Lys81. Asp177 functions as the Proton acceptor in the catalytic mechanism. Ser212 bears the Phosphoserine; by autocatalysis mark. The 69-residue stretch at 319–387 (QKINWDDLAA…VAPSILFKRN (69 aa)) folds into the AGC-kinase C-terminal domain. Position 360 is a phosphoserine; by MAPK1, MAPK3 and MAPK14 (Ser360). Ser376 and Ser381 each carry phosphoserine; by autocatalysis. Residues 426–687 (DLKDKPLGEG…MSGLRYNEWL (262 aa)) form the Protein kinase 2 domain. ATP is bound by residues 432–440 (LGEGSFSIC) and Lys455. Asp544 serves as the catalytic Proton acceptor. Thr581 carries the post-translational modification Phosphothreonine; by MAPK1, MAPK3 and MAPK14. 4 positions are modified to phosphoserine: Ser647, Ser657, Ser691, and Ser695. At Thr700 the chain carries Phosphothreonine; by MAPK1, MAPK3 and MAPK14. The segment at 741–802 (AKRRKMKKTS…TLFQFSDSVA (62 aa)) is disordered. The span at 749-779 (TSTSTETRSSSSESSHSSSSHSHGKTTPTKT) shows a compositional bias: low complexity. Residues Ser750, Ser752, and Ser758 each carry the phosphoserine; by autocatalysis modification. The segment covering 780–802 (LQPSNPADSNNPETLFQFSDSVA) has biased composition (polar residues). Position 798 is a phosphoserine (Ser798).

The protein belongs to the protein kinase superfamily. AGC Ser/Thr protein kinase family. S6 kinase subfamily. As to quaternary structure, forms a complex with either MAPK1/ERK2 or MAPK3/ERK1 in quiescent cells which transiently dissociates following mitogenic stimulation. Also associates with MAPK14/p38-alpha. Activated RPS6KA5 associates with and phosphorylates the NF-kappa-B p65 subunit RELA. Interacts with CREBBP and EP300. It depends on Mg(2+) as a cofactor. Post-translationally, ser-376 and Thr-581 phosphorylation is required for kinase activity. Ser-376 and Ser-212 are autophosphorylated by the C-terminal kinase domain, and their phosphorylation is essential for the catalytic activity of the N-terminal kinase domain. Phosphorylated at Ser-360, Thr-581 and Thr-700 by MAPK1/ERK2, MAPK3/ERK1 and MAPK14/p38-alpha. Autophosphorylated at Ser-750, Ser-752 and Ser-758 by the N-terminal kinase domain. In terms of processing, ubiquitinated. In terms of tissue distribution, widely expressed with high levels in heart, brain and placenta. Less abundant in lung, kidney and liver.

It is found in the nucleus. It localises to the cytoplasm. The enzyme catalyses L-seryl-[protein] + ATP = O-phospho-L-seryl-[protein] + ADP + H(+). The catalysed reaction is L-threonyl-[protein] + ATP = O-phospho-L-threonyl-[protein] + ADP + H(+). Activated by phosphorylation at Ser-360, Thr-581 and Thr-700 by MAPK1/ERK2, MAPK3/ERK1 and MAPK14/p38-alpha, and by further autophosphorylation of Ser-212, Ser-376 and Ser-381 by the activated C-terminal kinase domain. The active N-terminal kinase domain finally phosphorylates downstream substrates, as well as Ser-750, Ser-752 and Ser-758 in its own C-terminal region. Serine/threonine-protein kinase that is required for the mitogen or stress-induced phosphorylation of the transcription factors CREB1 and ATF1 and for the regulation of the transcription factors RELA, STAT3 and ETV1/ER81, and that contributes to gene activation by histone phosphorylation and functions in the regulation of inflammatory genes. Phosphorylates CREB1 and ATF1 in response to mitogenic or stress stimuli such as UV-C irradiation, epidermal growth factor (EGF) and anisomycin. Plays an essential role in the control of RELA transcriptional activity in response to TNF and upon glucocorticoid, associates in the cytoplasm with the glucocorticoid receptor NR3C1 and contributes to RELA inhibition and repression of inflammatory gene expression. In skeletal myoblasts is required for phosphorylation of RELA at 'Ser-276' during oxidative stress. In erythropoietin-stimulated cells, is necessary for the 'Ser-727' phosphorylation of STAT3 and regulation of its transcriptional potential. Phosphorylates ETV1/ER81 at 'Ser-191' and 'Ser-216', and thereby regulates its ability to stimulate transcription, which may be important during development and breast tumor formation. Directly represses transcription via phosphorylation of 'Ser-1' of histone H2A. Phosphorylates 'Ser-10' of histone H3 in response to mitogenics, stress stimuli and EGF, which results in the transcriptional activation of several immediate early genes, including proto-oncogenes c-fos/FOS and c-jun/JUN. May also phosphorylate 'Ser-28' of histone H3. Mediates the mitogen- and stress-induced phosphorylation of high mobility group protein 1 (HMGN1/HMG14). In lipopolysaccharide-stimulated primary macrophages, acts downstream of the Toll-like receptor TLR4 to limit the production of pro-inflammatory cytokines. Functions probably by inducing transcription of the MAP kinase phosphatase DUSP1 and the anti-inflammatory cytokine interleukin 10 (IL10), via CREB1 and ATF1 transcription factors. Plays a role in neuronal cell death by mediating the downstream effects of excitotoxic injury. Phosphorylates TRIM7 at 'Ser-107' in response to growth factor signaling via the MEK/ERK pathway, thereby stimulating its ubiquitin ligase activity. This Homo sapiens (Human) protein is Ribosomal protein S6 kinase alpha-5 (RPS6KA5).